The sequence spans 139 residues: NADPH-dependent 7-cyano-7-deazaguanine reductase (139 aa).

The active-site Thioimide intermediate is the cysteine 34. The active-site Proton donor is the aspartate 41. Substrate-binding positions include 56-58 (VEL) and 75-76 (HE).

Belongs to the GTP cyclohydrolase I family. QueF type 1 subfamily.

Its subcellular location is the cytoplasm. The catalysed reaction is 7-aminomethyl-7-carbaguanine + 2 NADP(+) = 7-cyano-7-deazaguanine + 2 NADPH + 3 H(+). The protein operates within tRNA modification; tRNA-queuosine biosynthesis. In terms of biological role, catalyzes the NADPH-dependent reduction of 7-cyano-7-deazaguanine (preQ0) to 7-aminomethyl-7-deazaguanine (preQ1). This chain is NADPH-dependent 7-cyano-7-deazaguanine reductase, found in Thiobacillus denitrificans (strain ATCC 25259 / T1).